Here is a 711-residue protein sequence, read N- to C-terminus: Hydroperoxide isomerase ALOXE3 (711 aa).

Residues 2–119 (AVYRLCVTTG…TVELRPGTAR (118 aa)) enclose the PLAT domain. The Lipoxygenase domain occupies 119 to 711 (RTICQDALPL…PPLIENSVSI (593 aa)). Fe cation contacts are provided by His-408, His-413, His-588, Asn-592, and Ile-711.

This sequence belongs to the lipoxygenase family. Fe cation serves as cofactor.

It localises to the cytoplasm. The catalysed reaction is a hydroperoxyeicosatetraenoate = a hydroxy-epoxy-eicosatetraenoate. The enzyme catalyses a hydroperoxyeicosatetraenoate = an oxoeicosatetraenoate + H2O. It carries out the reaction (12R)-hydroperoxy-(5Z,8Z,10E,14Z)-eicosatetraenoate = (8R)-hydroxy-(11R,12R)-epoxy-(5Z,9E,14Z)-eicosatrienoate. It catalyses the reaction (12S)-hydroperoxy-(5Z,8Z,10E,14Z)-eicosatetraenoate = (8R)-hydroxy-(11S,12S)-epoxy-(5Z,9E,14Z)-eicosatrienoate. The catalysed reaction is (12S)-hydroperoxy-(5Z,8Z,10E,14Z)-eicosatetraenoate = (10R)-hydroxy-(11S,12S)-epoxy-(5Z,8Z,14Z)-eicosatrienoate. The enzyme catalyses (15S)-hydroperoxy-(5Z,8Z,11Z,13E)-eicosatetraenoate = (13R)-hydroxy-(14S,15S)-epoxy-(5Z,8Z,11Z)-eicosatrienoate. It carries out the reaction (5S)-hydroperoxy-(6E,8Z,11Z,14Z)-eicosatetraenoate = 7R-hydroxy-5S,6S-epoxy-(8Z,11Z,14Z)-eicosatrienoate. It catalyses the reaction (13S)-hydroperoxy-(9Z,11E)-octadecadienoate = 11-hydroxy-(12S,13S)-epoxy-(9Z)-octadecenoate. The catalysed reaction is N-[omega-(9R)-hydroperoxy-(10E,12Z)-octadecadienoyloxy]acyl-beta-D-glucosyl-(1&lt;-&gt;1)-octadecasphing-4E-enine = a N-[omega-(9R,10R)-epoxy-(13R)-hydroxy-(11E)-octadecenoyloxy]acyl-beta-D-glucosyl-(1&lt;-&gt;1)-sphing-4E-enine. The enzyme catalyses a N-[omega-(9R)-hydroperoxy-(10E,12Z)-octadecadienoyloxy]-acylsphin-4E-enine = a N-[omega-(9R,10R)-epoxy-(13R)-hydroxy-(11E)-octadecenoyloxy]-acylsphing-4E-enine. It carries out the reaction (12R)-hydroperoxy-(5Z,8Z,10E,14Z)-eicosatetraenoate = 12-oxo-(5Z,8Z,10E,14Z)-eicosatetraenoate + H2O. It catalyses the reaction (12S)-hydroperoxy-(5Z,8Z,10E,14Z)-eicosatetraenoate = 12-oxo-(5Z,8Z,10E,14Z)-eicosatetraenoate + H2O. The catalysed reaction is (15S)-hydroperoxy-(5Z,8Z,11Z,13E)-eicosatetraenoate = 15-oxo-(5Z,8Z,11Z,13E)-eicosatetraenoate + H2O. The enzyme catalyses (13S)-hydroperoxy-(9Z,11E)-octadecadienoate = 13-oxo-(9Z,11E)-octadecadienoate + H2O. It carries out the reaction (8S)-hydroperoxy-(5Z,9E,11Z,14Z)-eicosatetraenoate = (10R)-hydroxy-(8S,9S)-epoxy-(5Z,11Z,14Z)-eicosatrienoate. It catalyses the reaction (8R)-hydroperoxy-(5Z,9E,11Z,14Z)-eicosatetraenoate = 8-oxo-(5Z,9E,11Z,14Z)-eicosatetraenoate + H2O. The catalysed reaction is (8S)-hydroperoxy-(5Z,9E,11Z,14Z)-eicosatetraenoate = 8-oxo-(5Z,9E,11Z,14Z)-eicosatetraenoate + H2O. The protein operates within lipid metabolism; hydroperoxy eicosatetraenoic acid biosynthesis. Its pathway is lipid metabolism; sphingolipid metabolism. Functionally, non-heme iron-containing lipoxygenase which is atypical in that it displays a prominent hydroperoxide isomerase activity and a reduced lipoxygenases activity. The hydroperoxide isomerase activity catalyzes the isomerization of hydroperoxides, derived from arachidonic and linoleic acid by ALOX12B, into hepoxilin-type epoxyalcohols and ketones. In presence of oxygen, oxygenates polyunsaturated fatty acids, including arachidonic acid, to produce fatty acid hydroperoxides. In the skin, acts downstream of ALOX12B on the linoleate moiety of esterified omega-hydroxyacyl-sphingosine (EOS) ceramides to produce an epoxy-ketone derivative, a crucial step in the conjugation of omega-hydroxyceramide to membrane proteins. Therefore plays a crucial role in the synthesis of corneocytes lipid envelope and the establishment of the skin barrier to water loss. In parallel, it may have a signaling function in barrier formation through the production of hepoxilins metabolites. Also plays a role in adipocyte differentiation through hepoxilin A3 and hepoxilin B3 production which in turn activate PPARG. Through the production of hepoxilins in the spinal cord, it may regulate inflammatory tactile allodynia. The protein is Hydroperoxide isomerase ALOXE3 of Rattus norvegicus (Rat).